The following is a 345-amino-acid chain: Phosphate acyltransferase (345 aa).

The protein belongs to the PlsX family. In terms of assembly, homodimer. Probably interacts with PlsY.

Its subcellular location is the cytoplasm. The enzyme catalyses a fatty acyl-[ACP] + phosphate = an acyl phosphate + holo-[ACP]. Its pathway is lipid metabolism; phospholipid metabolism. Its function is as follows. Catalyzes the reversible formation of acyl-phosphate (acyl-PO(4)) from acyl-[acyl-carrier-protein] (acyl-ACP). This enzyme utilizes acyl-ACP as fatty acyl donor, but not acyl-CoA. The protein is Phosphate acyltransferase of Wolbachia pipientis wMel.